A 331-amino-acid polypeptide reads, in one-letter code: MINTSIPLVDLHRHLDGNVRVNTIWELGHQHGIALPADSLETLAPFVQIQGKETSLVAFLKKLDWMVAVLADLDAVKRVAYENVADAALSGLDYAELRFSPYYMAMNHKLPIEGVVEAVIDGVKAGLKDYQVKINLIGIMSRSFGQAACTQELEGLLAHKQHLVAMDLAGDELGFPGELFNEHFKRVRDAGLAITAHAGEAAGSQSMWQAIQELGATRIGHGVNAIHDPKLMEYLAKHRIGIESCPTSNLHTSTVSSYAEHPFRTFMDAGVLISLNTDDPGVSAIDIKHEYRIAKSELRLSDAELAQVQRNGVEMAFLSESERKALYAAKA.

Zn(2+) contacts are provided by histidine 12 and histidine 14. The substrate site is built by histidine 14, aspartate 16, and glycine 170. Histidine 197 is a Zn(2+) binding site. The Proton donor role is filled by glutamate 200. Aspartate 278 serves as a coordination point for Zn(2+). Residue aspartate 279 coordinates substrate.

Belongs to the metallo-dependent hydrolases superfamily. Adenosine and AMP deaminases family. Adenosine deaminase subfamily. Requires Zn(2+) as cofactor.

It catalyses the reaction adenosine + H2O + H(+) = inosine + NH4(+). It carries out the reaction 2'-deoxyadenosine + H2O + H(+) = 2'-deoxyinosine + NH4(+). Its function is as follows. Catalyzes the hydrolytic deamination of adenosine and 2-deoxyadenosine. This is Adenosine deaminase from Shewanella sp. (strain MR-4).